Consider the following 630-residue polypeptide: Protein mono-ADP-ribosyltransferase PARP6 (630 aa).

Position 237 is an ADP-ribosylcysteine (C237). One can recognise a PARP catalytic domain in the interval E394–M620. At D600 the chain carries ADP-ribosyl aspartic acid.

This sequence belongs to the ARTD/PARP family. Post-translationally, auto-mono-ADP-ribosylated.

The catalysed reaction is L-aspartyl-[protein] + NAD(+) = 4-O-(ADP-D-ribosyl)-L-aspartyl-[protein] + nicotinamide. It carries out the reaction L-cysteinyl-[protein] + NAD(+) = S-(ADP-D-ribosyl)-L-cysteinyl-[protein] + nicotinamide + H(+). In terms of biological role, mono-ADP-ribosyltransferase that mediates mono-ADP-ribosylation of target proteins. The polypeptide is Protein mono-ADP-ribosyltransferase PARP6 (Mus musculus (Mouse)).